A 167-amino-acid polypeptide reads, in one-letter code: MAILNILHYPDPRLRRKAQPVAAVDKSIKKLADDMLETMYQAPGIGLAAVQVNVPKQVVVIDISEDKSSPLVLINPEIVARQGKAESEEGCLSVPEIFEPVTRAAEITVHYLDREGQKQELQTQELLATCIQHELDHLEGKLFIDYFSTLKRQRIRKKAEKRQRLSA.

Cysteine 91 and histidine 133 together coordinate Fe cation. Residue glutamate 134 is part of the active site. Position 137 (histidine 137) interacts with Fe cation.

It belongs to the polypeptide deformylase family. The cofactor is Fe(2+).

The catalysed reaction is N-terminal N-formyl-L-methionyl-[peptide] + H2O = N-terminal L-methionyl-[peptide] + formate. Functionally, removes the formyl group from the N-terminal Met of newly synthesized proteins. Requires at least a dipeptide for an efficient rate of reaction. N-terminal L-methionine is a prerequisite for activity but the enzyme has broad specificity at other positions. In Nitrosococcus oceani (strain ATCC 19707 / BCRC 17464 / JCM 30415 / NCIMB 11848 / C-107), this protein is Peptide deformylase.